The sequence spans 200 residues: Inner membrane-spanning protein YciB (200 aa).

6 consecutive transmembrane segments (helical) span residues 1 to 21 (MPPL…FFAN), 37 to 57 (IGAP…IALA), 66 to 86 (LAIM…LTLW), 103 to 123 (LFGG…GYVF), 136 to 156 (KLTL…EIVW), and 167 to 187 (FKVW…MPLI).

The protein belongs to the YciB family.

The protein resides in the cell inner membrane. Its function is as follows. Plays a role in cell envelope biogenesis, maintenance of cell envelope integrity and membrane homeostasis. The sequence is that of Inner membrane-spanning protein YciB from Brucella melitensis biotype 1 (strain ATCC 23456 / CCUG 17765 / NCTC 10094 / 16M).